A 247-amino-acid polypeptide reads, in one-letter code: Cell division protein ZapD (247 aa).

Belongs to the ZapD family. Interacts with FtsZ.

The protein localises to the cytoplasm. In terms of biological role, cell division factor that enhances FtsZ-ring assembly. Directly interacts with FtsZ and promotes bundling of FtsZ protofilaments, with a reduction in FtsZ GTPase activity. This Shigella boydii serotype 4 (strain Sb227) protein is Cell division protein ZapD.